Here is a 484-residue protein sequence, read N- to C-terminus: Putative cysteine ligase BshC (484 aa).

A coiled-coil region spans residues 372–435 (RAFRDRVEGL…AARDEVLARH (64 aa)).

It belongs to the BshC family.

The protein is Putative cysteine ligase BshC of Thermus thermophilus (strain ATCC 27634 / DSM 579 / HB8).